The primary structure comprises 433 residues: MLSVIILAAGKGTRMHSSLPKTLHTICGEPMLFYILETAFSISDDVHLVLHHQQERIKEAVLERSKGVIFHTQIVEKYSGTGGAIMQEDKTPIPTKHERVLILNADMPLITKDALAPLLESQNNAIGLLHLADPKGYGRVVLENHQVKKIVEEKDANDEEKTIQSVNAGVYGFERKFLEKYLPKLHDQNAQKEYYLTDLIALGINENEKIDALFLEEECFLGVNSQTERAKAEEIMLERLRKNAMDLGVVMQLPSSIYLEKGVSFKGECVLEQGVRLIGNCLIENAHIKAYSVIEESQIVNSSVGPFAHARPKSVICNSHVGNFVETKNAKLQGAKAGHLSYLGDCEIGKNTNVGAGVITCNYDGKKKHQTIIGENVFIGSDSQLVAPINIGSNVLIGSGTTITKDIPSGSLSLSRAPQINIENGYFKFFKKP.

Residues 1–226 (MLSVIILAAG…EECFLGVNSQ (226 aa)) form a pyrophosphorylase region. UDP-N-acetyl-alpha-D-glucosamine is bound by residues 7–10 (LAAG), lysine 21, and 80–81 (GT). Aspartate 106 lines the Mg(2+) pocket. Residues glycine 138, glutamate 152, asparagine 167, and asparagine 224 each contribute to the UDP-N-acetyl-alpha-D-glucosamine site. Asparagine 224 contacts Mg(2+). The tract at residues 227–247 (TERAKAEEIMLERLRKNAMDL) is linker. The interval 248 to 433 (GVVMQLPSSI…NGYFKFFKKP (186 aa)) is N-acetyltransferase. UDP-N-acetyl-alpha-D-glucosamine-binding residues include arginine 311 and lysine 328. Catalysis depends on histidine 339, which acts as the Proton acceptor. The UDP-N-acetyl-alpha-D-glucosamine site is built by tyrosine 342 and asparagine 353. Residues alanine 356, 362–363 (NY), serine 381, serine 399, and arginine 416 contribute to the acetyl-CoA site.

The protein in the N-terminal section; belongs to the N-acetylglucosamine-1-phosphate uridyltransferase family. In the C-terminal section; belongs to the transferase hexapeptide repeat family. As to quaternary structure, homotrimer. Requires Mg(2+) as cofactor.

The protein resides in the cytoplasm. It catalyses the reaction alpha-D-glucosamine 1-phosphate + acetyl-CoA = N-acetyl-alpha-D-glucosamine 1-phosphate + CoA + H(+). The catalysed reaction is N-acetyl-alpha-D-glucosamine 1-phosphate + UTP + H(+) = UDP-N-acetyl-alpha-D-glucosamine + diphosphate. The protein operates within nucleotide-sugar biosynthesis; UDP-N-acetyl-alpha-D-glucosamine biosynthesis; N-acetyl-alpha-D-glucosamine 1-phosphate from alpha-D-glucosamine 6-phosphate (route II): step 2/2. It participates in nucleotide-sugar biosynthesis; UDP-N-acetyl-alpha-D-glucosamine biosynthesis; UDP-N-acetyl-alpha-D-glucosamine from N-acetyl-alpha-D-glucosamine 1-phosphate: step 1/1. It functions in the pathway bacterial outer membrane biogenesis; LPS lipid A biosynthesis. Functionally, catalyzes the last two sequential reactions in the de novo biosynthetic pathway for UDP-N-acetylglucosamine (UDP-GlcNAc). The C-terminal domain catalyzes the transfer of acetyl group from acetyl coenzyme A to glucosamine-1-phosphate (GlcN-1-P) to produce N-acetylglucosamine-1-phosphate (GlcNAc-1-P), which is converted into UDP-GlcNAc by the transfer of uridine 5-monophosphate (from uridine 5-triphosphate), a reaction catalyzed by the N-terminal domain. This chain is Bifunctional protein GlmU, found in Helicobacter pylori (strain HPAG1).